We begin with the raw amino-acid sequence, 366 residues long: Mitogen-activated protein kinase p38a (366 aa).

In terms of domain architecture, Protein kinase spans tyrosine 25–leucine 312. ATP is bound by residues valine 31–valine 39 and lysine 54. Residue aspartate 154 is the Proton acceptor of the active site. Threonine 184 is modified (phosphothreonine). A TXY motif is present at residues threonine 184–tyrosine 186. Tyrosine 186 carries the phosphotyrosine modification.

The protein belongs to the protein kinase superfamily. CMGC Ser/Thr protein kinase family. MAP kinase subfamily. It depends on Mg(2+) as a cofactor. Dually phosphorylated on Thr-184 and Tyr-186, which activates the enzyme.

Its subcellular location is the nucleus. It catalyses the reaction L-seryl-[protein] + ATP = O-phospho-L-seryl-[protein] + ADP + H(+). The enzyme catalyses L-threonyl-[protein] + ATP = O-phospho-L-threonyl-[protein] + ADP + H(+). Activated by threonine and tyrosine phosphorylation by Mkk3 in response to environmental stress. Its function is as follows. Kinase involved in a signal transduction pathway. May down-regulate insect immunity gene expression after prolonged infection. The chain is Mitogen-activated protein kinase p38a from Drosophila melanogaster (Fruit fly).